A 307-amino-acid polypeptide reads, in one-letter code: GTPase Era (307 aa).

The 170-residue stretch at 17-186 (RCGFVAIVGR…LELIKPYLPE (170 aa)) folds into the Era-type G domain. Residues 25–32 (GRPNVGKS) form a G1 region. 25–32 (GRPNVGKS) is a GTP binding site. Residues 51–55 (QTTRN) form a G2 region. Residues 72–75 (DTPG) are G3. Residues 72–76 (DTPGF) and 133–136 (NKID) contribute to the GTP site. A G4 region spans residues 133 to 136 (NKID). The tract at residues 165–167 (VSA) is G5. The 77-residue stretch at 217-293 (LGEELPYAMN…FLKVWVKVKS (77 aa)) folds into the KH type-2 domain.

It belongs to the TRAFAC class TrmE-Era-EngA-EngB-Septin-like GTPase superfamily. Era GTPase family. As to quaternary structure, monomer.

The protein resides in the cytoplasm. It localises to the cell inner membrane. In terms of biological role, an essential GTPase that binds both GDP and GTP, with rapid nucleotide exchange. Plays a role in 16S rRNA processing and 30S ribosomal subunit biogenesis and possibly also in cell cycle regulation and energy metabolism. This Neisseria meningitidis serogroup B (strain ATCC BAA-335 / MC58) protein is GTPase Era.